Here is a 318-residue protein sequence, read N- to C-terminus: EFRASIPQNVQIEAIDPHTARMTWDPPAKSYGSIIGYTIQWSTDDLWLEQVKVASDNSYDFKDLQSQQTIVASILAHHRPDTSVKFEYIGTRSTPVKVTTPLPSRVMKKPSFRATYCEDLEELDMLIHDPEEVVGMFGGFEVLMRAGDAELLKSWQSVVNLTAEERRYKLKGLVPSLPYAVTVRGVALPSRRFSELAEPVHFKISRAEQSVPQNVDMQATDPHTIEMTWDCRPNPTVALLATPSAGVAITRSSRSLHLASVQLYTFTGLEPQVSLSASICVHYKPQKSPNFEYISSFSEVVTATTPSVEQVDFAEGEE.

Fibronectin type-III domains are found at residues 6–103 (IPQN…TPLP), 109–207 (KPSF…ISRA), and 211–308 (VPQN…TPSV).

This is Oncosphere antigen A (ONCA) from Hydatigena taeniaeformis (Feline tapeworm).